Here is a 304-residue protein sequence, read N- to C-terminus: Glycine--tRNA ligase alpha subunit (304 aa).

Belongs to the class-II aminoacyl-tRNA synthetase family. In terms of assembly, tetramer of two alpha and two beta subunits.

It is found in the cytoplasm. It carries out the reaction tRNA(Gly) + glycine + ATP = glycyl-tRNA(Gly) + AMP + diphosphate. This chain is Glycine--tRNA ligase alpha subunit, found in Yersinia enterocolitica serotype O:8 / biotype 1B (strain NCTC 13174 / 8081).